The sequence spans 453 residues: tRNA-2-methylthio-N(6)-dimethylallyladenosine synthase (453 aa).

The region spanning 17–135 (GTFFIETWGC…FPEYLNRAKQ (119 aa)) is the MTTase N-terminal domain. Positions 26, 62, 96, 172, 176, and 179 each coordinate [4Fe-4S] cluster. The region spanning 158-388 (RKSSTKAFVT…VEVVNKSCEK (231 aa)) is the Radical SAM core domain. The region spanning 391-453 (KKYQDRIVKV…LSFSLEGEEV (63 aa)) is the TRAM domain.

The protein belongs to the methylthiotransferase family. MiaB subfamily. As to quaternary structure, monomer. The cofactor is [4Fe-4S] cluster.

It localises to the cytoplasm. The catalysed reaction is N(6)-dimethylallyladenosine(37) in tRNA + (sulfur carrier)-SH + AH2 + 2 S-adenosyl-L-methionine = 2-methylsulfanyl-N(6)-dimethylallyladenosine(37) in tRNA + (sulfur carrier)-H + 5'-deoxyadenosine + L-methionine + A + S-adenosyl-L-homocysteine + 2 H(+). Functionally, catalyzes the methylthiolation of N6-(dimethylallyl)adenosine (i(6)A), leading to the formation of 2-methylthio-N6-(dimethylallyl)adenosine (ms(2)i(6)A) at position 37 in tRNAs that read codons beginning with uridine. In Clostridium tetani (strain Massachusetts / E88), this protein is tRNA-2-methylthio-N(6)-dimethylallyladenosine synthase.